The chain runs to 250 residues: Large ribosomal subunit protein uL29m (250 aa).

The N-terminal 24 residues, 1–24 (MRPGAASIRTTGSVLAFLVPSAQC), are a transit peptide targeting the mitochondrion. The tract at residues 66–86 (VLSKKGSGDQPPKPVPITEKV) is disordered.

This sequence belongs to the universal ribosomal protein uL29 family. In terms of assembly, component of the mitochondrial large ribosomal subunit. Mature mitochondrial ribosomes consist of a small (37S) and a large (54S) subunit. The 37S subunit contains at least 33 different proteins and 1 molecule of RNA (15S). The 54S subunit contains at least 45 different proteins and 1 molecule of RNA (21S).

The protein resides in the mitochondrion. This Phaeosphaeria nodorum (strain SN15 / ATCC MYA-4574 / FGSC 10173) (Glume blotch fungus) protein is Large ribosomal subunit protein uL29m (MRPL4).